The sequence spans 453 residues: Homogentisate 1,2-dioxygenase (453 aa).

Histidine 306 functions as the Proton acceptor in the catalytic mechanism. Histidine 349 and glutamate 355 together coordinate Fe cation. Residues tyrosine 364 and histidine 385 each coordinate homogentisate. Histidine 385 provides a ligand contact to Fe cation.

It belongs to the homogentisate dioxygenase family. As to quaternary structure, hexamer; dimer of trimers. Requires Fe cation as cofactor.

It carries out the reaction homogentisate + O2 = 4-maleylacetoacetate + H(+). It functions in the pathway amino-acid degradation; L-phenylalanine degradation; acetoacetate and fumarate from L-phenylalanine: step 4/6. In terms of biological role, involved in the catabolism of homogentisate (2,5-dihydroxyphenylacetate or 2,5-OH-PhAc), a central intermediate in the degradation of phenylalanine and tyrosine. Catalyzes the oxidative ring cleavage of the aromatic ring of homogentisate to yield maleylacetoacetate. The protein is Homogentisate 1,2-dioxygenase of Rhizobium etli (strain CIAT 652).